Here is a 723-residue protein sequence, read N- to C-terminus: Peroxisomal bifunctional enzyme (723 aa).

The enoyl-CoA hydratase / isomerase stretch occupies residues methionine 1–serine 282. Residue lysine 38 is modified to N6-succinyllysine. Residue glycine 101 participates in substrate binding. Lysine 165 carries the N6-acetyllysine; alternate modification. Lysine 165 is modified (N6-succinyllysine; alternate). Lysine 171 is subject to N6-acetyllysine. Position 219 is an N6-acetyllysine; alternate (lysine 219). Lysine 219 carries the N6-succinyllysine; alternate modification. Lysine 250 bears the N6-acetyllysine mark. An N6-succinyllysine mark is found at lysine 280 and lysine 290. Residues threonine 283–glycine 572 are 3-hydroxyacyl-CoA dehydrogenase. Residues lysine 346, lysine 350, and lysine 464 each carry the N6-acetyllysine modification. Lysine 532 carries the N6-succinyllysine modification. Threonine 548 bears the Phosphothreonine mark. Residue lysine 577 is modified to N6-succinyllysine. An N6-acetyllysine; alternate mark is found at lysine 584, lysine 591, and lysine 710. Residues lysine 584, lysine 591, and lysine 710 each carry the N6-succinyllysine; alternate modification. A Phosphoserine modification is found at serine 718. Residues serine 721–leucine 723 carry the Microbody targeting signal motif. Lysine 722 is modified (N6-succinyllysine).

It in the N-terminal section; belongs to the enoyl-CoA hydratase/isomerase family. The protein in the C-terminal section; belongs to the 3-hydroxyacyl-CoA dehydrogenase family. Monomer. Acetylated, leading to enhanced enzyme activity. Acetylation is enhanced by up to 80% after treatment either with trichostin A (TSA) or with nicotinamide (NAM) with highest increase on Lys-346. Acetylation and enzyme activity increased by about 1.5% on addition of fatty acids. As to expression, liver and kidney. Strongly expressed in the terminal segments of the proximal tubule. Lower amounts seen in the brain.

The protein resides in the peroxisome. The catalysed reaction is a (3S)-3-hydroxyacyl-CoA = a (2E)-enoyl-CoA + H2O. It catalyses the reaction a 4-saturated-(3S)-3-hydroxyacyl-CoA = a (3E)-enoyl-CoA + H2O. It carries out the reaction a (3Z)-enoyl-CoA = a 4-saturated (2E)-enoyl-CoA. The enzyme catalyses a (3E)-enoyl-CoA = a 4-saturated (2E)-enoyl-CoA. The catalysed reaction is a (3S)-3-hydroxyacyl-CoA + NAD(+) = a 3-oxoacyl-CoA + NADH + H(+). It catalyses the reaction (2S,3S)-3-hydroxy-2-methylbutanoyl-CoA = (2E)-2-methylbut-2-enoyl-CoA + H2O. It carries out the reaction (3S)-hydroxyhexadecanoyl-CoA + NAD(+) = 3-oxohexadecanoyl-CoA + NADH + H(+). The enzyme catalyses (3S)-hydroxyhexadecanoyl-CoA = (2E)-hexadecenoyl-CoA + H2O. The catalysed reaction is (2E)-hexadecenedioyl-CoA + H2O = (3S)-hydroxyhexadecanedioyl-CoA. It catalyses the reaction (3S)-hydroxyhexadecanedioyl-CoA + NAD(+) = 3-oxohexadecanedioyl-CoA + NADH + H(+). It carries out the reaction (3E,5Z)-tetradecadienoyl-CoA = (2E,5Z)-tetradecadienoyl-CoA. The enzyme catalyses (3E,5Z)-octadienoyl-CoA = (2E,5Z)-octadienoyl-CoA. The catalysed reaction is (3S)-hydroxydecanoyl-CoA + NAD(+) = 3-oxodecanoyl-CoA + NADH + H(+). It catalyses the reaction (3E)-decenoyl-CoA = (2E)-decenoyl-CoA. It carries out the reaction (3Z)-hexenoyl-CoA = (2E)-hexenoyl-CoA. The enzyme catalyses (3E)-hexenoyl-CoA = (2E)-hexenoyl-CoA. The catalysed reaction is (3S)-hydroxydecanoyl-CoA = (2E)-decenoyl-CoA + H2O. It catalyses the reaction (3S)-hydroxyhexanoyl-CoA = (2E)-hexenoyl-CoA + H2O. It functions in the pathway lipid metabolism; fatty acid beta-oxidation. With respect to regulation, enzyme activity enhanced by acetylation. Peroxisomal trifunctional enzyme possessing 2-enoyl-CoA hydratase, 3-hydroxyacyl-CoA dehydrogenase, and delta 3, delta 2-enoyl-CoA isomerase activities. Catalyzes two of the four reactions of the long chain fatty acids peroxisomal beta-oxidation pathway. Can also use branched-chain fatty acids such as 2-methyl-2E-butenoyl-CoA as a substrate, which is hydrated into (2S,3S)-3-hydroxy-2-methylbutanoyl-CoA. Optimal isomerase for 2,5 double bonds into 3,5 form isomerization in a range of enoyl-CoA species. Also able to isomerize both 3-cis and 3-trans double bonds into the 2-trans form in a range of enoyl-CoA species. With HSD17B4, catalyzes the hydration of trans-2-enoyl-CoA and the dehydrogenation of 3-hydroxyacyl-CoA, but with opposite chiral specificity. Regulates the amount of medium-chain dicarboxylic fatty acids which are essential regulators of all fatty acid oxidation pathways. Also involved in the degradation of long-chain dicarboxylic acids through peroxisomal beta-oxidation. The chain is Peroxisomal bifunctional enzyme from Homo sapiens (Human).